Reading from the N-terminus, the 553-residue chain is Transcriptional regulator HilA (553 aa).

Positions 11–107 (NKKFVFDDFI…LYGQGYRFNR (97 aa)) form a DNA-binding region, ompR/PhoB-type. The residue at position 62 (Asp-62) is a 4-aspartylphosphate. Residues 372 to 405 (ADIKYYYGWNLFMAGQLEEALQTINECLKLDPTR) form a TPR repeat.

Its function is as follows. The main transcriptional regulator of the Salmonella pathogenicity island 1 (SPI1) gene expression. Activates the expression of invasion genes by a direct action at their promoters and also indirectly by increasing the level of InvF. Also binds upstream of prgH and directly activates the expression of prgHIJK operon. This chain is Transcriptional regulator HilA (hilA), found in Salmonella typhimurium (strain LT2 / SGSC1412 / ATCC 700720).